The sequence spans 148 residues: Large ribosomal subunit protein bL9 (148 aa).

This sequence belongs to the bacterial ribosomal protein bL9 family.

In terms of biological role, binds to the 23S rRNA. The protein is Large ribosomal subunit protein bL9 of Hydrogenobaculum sp. (strain Y04AAS1).